We begin with the raw amino-acid sequence, 367 residues long: 5-amino-6-(D-ribitylamino)uracil--L-tyrosine 4-hydroxyphenyl transferase (367 aa).

The Radical SAM core domain occupies 54–288; it reads ITYIENWNIN…VYAISRLMFR (235 aa). Cysteine 68, cysteine 72, and cysteine 75 together coordinate [4Fe-4S] cluster.

Belongs to the radical SAM superfamily. CofH family. Consists of two subunits, CofG and CofH. It depends on [4Fe-4S] cluster as a cofactor.

It catalyses the reaction 5-amino-6-(D-ribitylamino)uracil + L-tyrosine + S-adenosyl-L-methionine = 5-amino-5-(4-hydroxybenzyl)-6-(D-ribitylimino)-5,6-dihydrouracil + 2-iminoacetate + 5'-deoxyadenosine + L-methionine + H(+). It participates in cofactor biosynthesis; coenzyme F0 biosynthesis. Its function is as follows. Catalyzes the radical-mediated synthesis of 5-amino-5-(4-hydroxybenzyl)-6-(D-ribitylimino)-5,6-dihydrouracil from 5-amino-6-(D-ribitylamino)uracil and L-tyrosine. In Methanothermobacter thermautotrophicus (strain ATCC 29096 / DSM 1053 / JCM 10044 / NBRC 100330 / Delta H) (Methanobacterium thermoautotrophicum), this protein is 5-amino-6-(D-ribitylamino)uracil--L-tyrosine 4-hydroxyphenyl transferase.